The chain runs to 221 residues: MRSQLSLMGKKEGMIHVFDKDGNLVACSVISVGSNVVTQIKVDSTDGYNAIQMGANEINVPEKTLEKRMNKPELGHLKKSGSRVFGLLKEVRLSEDAINEVSLGNEFGLEVLEDISSVDISGVSKGKGFQGVMKRFGFRGGPKTHGSGFHRHAGSIGMRSTPGRCFPGSKRPSHMGTVNVTVKNLEVVKIDLEKKVLLVKGAIPGPRGSVVVIRRSSRAKG.

The disordered stretch occupies residues 140–160 (GGPKTHGSGFHRHAGSIGMRS).

The protein belongs to the universal ribosomal protein uL3 family. Part of the 50S ribosomal subunit. Forms a cluster with proteins L14 and L19.

Its function is as follows. One of the primary rRNA binding proteins, it binds directly near the 3'-end of the 23S rRNA, where it nucleates assembly of the 50S subunit. This Chlamydia caviae (strain ATCC VR-813 / DSM 19441 / 03DC25 / GPIC) (Chlamydophila caviae) protein is Large ribosomal subunit protein uL3.